A 175-amino-acid polypeptide reads, in one-letter code: Large ribosomal subunit protein uL30 (175 aa).

It belongs to the universal ribosomal protein uL30 family. In terms of assembly, part of the 50S ribosomal subunit.

The protein is Large ribosomal subunit protein uL30 of Pyrobaculum neutrophilum (strain DSM 2338 / JCM 9278 / NBRC 100436 / V24Sta) (Thermoproteus neutrophilus).